We begin with the raw amino-acid sequence, 248 residues long: Protein maestro (248 aa).

The interval 1–23 (MEQTRKIPNQPLPTPTSQSKKRR) is disordered. Residues 128-163 (SFFIDITLQARTLLDDEDDSVRYSAFVLFGQLASFA) form an HEAT repeat.

As to expression, prominent expression seen in testis, brain, liver and heart. Weakly expressed in the kidney.

It is found in the nucleus. The protein localises to the nucleolus. The polypeptide is Protein maestro (Mro) (Mus musculus (Mouse)).